Here is a 353-residue protein sequence, read N- to C-terminus: Methylthioribose-1-phosphate isomerase (353 aa).

Residues 51–53 (RGA), R94, and Q203 contribute to the substrate site. D244 functions as the Proton donor in the catalytic mechanism. Residue 254–255 (NK) participates in substrate binding.

The protein belongs to the eIF-2B alpha/beta/delta subunits family. MtnA subfamily.

It catalyses the reaction 5-(methylsulfanyl)-alpha-D-ribose 1-phosphate = 5-(methylsulfanyl)-D-ribulose 1-phosphate. It participates in amino-acid biosynthesis; L-methionine biosynthesis via salvage pathway; L-methionine from S-methyl-5-thio-alpha-D-ribose 1-phosphate: step 1/6. Its function is as follows. Catalyzes the interconversion of methylthioribose-1-phosphate (MTR-1-P) into methylthioribulose-1-phosphate (MTRu-1-P). The protein is Methylthioribose-1-phosphate isomerase of Nostoc punctiforme (strain ATCC 29133 / PCC 73102).